The sequence spans 120 residues: MRRTAFIVLSLVALIAPCVTSVAVEDLAQANNIETNVNPNVKVGSRRHLRSEANGRLAVVDEEKVFRDFCGLGPCFDWLKPQNLGGFIYKFVEWASRDRVNFKLKMLKREHQIPIRKRNQ.

An N-terminal signal peptide occupies residues 1 to 21 (MRRTAFIVLSLVALIAPCVTS). The short motif at 47–64 (RHLRSEANGRLAVVDEEK) is the RxLR-dEER element.

Belongs to the RxLR effector family.

The protein localises to the secreted. The protein resides in the host cytoplasm. Its subcellular location is the host nucleus. Effector that acts as a broad suppressor of cell death to interrupt plant immunity. Inhibits cell death induced by cell death-inducing proteins, including the PAMP elicitor INF1 from P.infestans. In Plasmopara viticola (Downy mildew of grapevine), this protein is Secreted RxLR effector protein 29.